The following is a 366-amino-acid chain: Ribosomal RNA large subunit methyltransferase M (366 aa).

S-adenosyl-L-methionine is bound by residues S188, 221–224 (CPGG), D240, D260, and D277. Residue K306 is the Proton acceptor of the active site.

The protein belongs to the class I-like SAM-binding methyltransferase superfamily. RNA methyltransferase RlmE family. RlmM subfamily. As to quaternary structure, monomer.

It is found in the cytoplasm. It carries out the reaction cytidine(2498) in 23S rRNA + S-adenosyl-L-methionine = 2'-O-methylcytidine(2498) in 23S rRNA + S-adenosyl-L-homocysteine + H(+). Functionally, catalyzes the 2'-O-methylation at nucleotide C2498 in 23S rRNA. In Shigella sonnei (strain Ss046), this protein is Ribosomal RNA large subunit methyltransferase M.